We begin with the raw amino-acid sequence, 137 residues long: Large ribosomal subunit protein mL61 (137 aa).

The protein belongs to the mitochondrion-specific ribosomal protein mL61 family. Component of the mitochondrial large ribosomal subunit (mt-LSU). Mature yeast 74S mitochondrial ribosomes consist of a small (37S) and a large (54S) subunit. The 37S small subunit contains a 15S ribosomal RNA (15S mt-rRNA) and 34 different proteins. The 54S large subunit contains a 21S rRNA (21S mt-rRNA) and 46 different proteins.

Its subcellular location is the mitochondrion. Its function is as follows. Component of the mitochondrial ribosome (mitoribosome), a dedicated translation machinery responsible for the synthesis of mitochondrial genome-encoded proteins, including at least some of the essential transmembrane subunits of the mitochondrial respiratory chain. The mitoribosomes are attached to the mitochondrial inner membrane and translation products are cotranslationally integrated into the membrane. mL61 is not essential in cells grown at 30 degrees Celsius but is required for mitochondrial translation in cells grown at 18 degrees Celsius. The chain is Large ribosomal subunit protein mL61 (MRP49) from Saccharomyces cerevisiae (strain ATCC 204508 / S288c) (Baker's yeast).